Here is a 664-residue protein sequence, read N- to C-terminus: Protein cueball (664 aa).

The N-terminal stretch at 1–21 (MRNLGIAVTFAVLLVIGYVTA) is a signal peptide. Residues 22-552 (LEWDAVVTTD…VTYCKNSFNR (531 aa)) lie on the Extracellular side of the membrane. Residues Asn-40, Asn-140, and Asn-188 are each glycosylated (N-linked (GlcNAc...) asparagine). LDL-receptor class B repeat units lie at residues 115-157 (RKLY…ENHD), 168-211 (RHLY…DHYN), and 212-257 (NRIY…NSQY). EGF-like domains are found at residues 367–399 (EIPI…FEGE), 402–438 (DRNI…ARCE), and 473–510 (EEYT…KRCE). 8 disulfides stabilise this stretch: Cys-371–Cys-380, Cys-375–Cys-390, Cys-406–Cys-416, Cys-410–Cys-426, Cys-428–Cys-437, Cys-477–Cys-487, Cys-481–Cys-498, and Cys-500–Cys-509. Residue Asn-431 is glycosylated (N-linked (GlcNAc...) asparagine). N-linked (GlcNAc...) asparagine glycosylation occurs at Asn-491. N-linked (GlcNAc...) asparagine glycosylation is present at Asn-551. Residues 553 to 573 (TVVYVSLAFTASLVTLVTILC) form a helical membrane-spanning segment. At 574–664 (TVRRMYERNR…KLPSCVAEKN (91 aa)) the chain is on the cytoplasmic side.

This sequence belongs to the cueball family.

It is found in the cell membrane. In terms of biological role, has a role in spermatogenesis and oogenesis. This is Protein cueball from Aedes aegypti (Yellowfever mosquito).